Here is a 209-residue protein sequence, read N- to C-terminus: Pyroglutamyl-peptidase 1 (209 aa).

Active-site residues include Glu-85, Cys-149, and His-168.

Belongs to the peptidase C15 family. Monomer.

It localises to the cytoplasm. It catalyses the reaction Release of an N-terminal pyroglutamyl group from a polypeptide, the second amino acid generally not being Pro.. Inhibited by transition metal ions including Ni(2+), Zn(2+), and Cu(2+) and by sulfhydryl-blocking agents. In terms of biological role, removes 5-oxoproline from various penultimate amino acid residues except L-proline. This is Pyroglutamyl-peptidase 1 (PGPEP1) from Homo sapiens (Human).